The sequence spans 104 residues: Large ribosomal subunit protein bL21 (104 aa).

This sequence belongs to the bacterial ribosomal protein bL21 family. As to quaternary structure, part of the 50S ribosomal subunit. Contacts protein L20.

In terms of biological role, this protein binds to 23S rRNA in the presence of protein L20. The protein is Large ribosomal subunit protein bL21 of Helicobacter pylori (strain HPAG1).